The sequence spans 414 residues: Deoxyuridine 5'-triphosphate nucleotidohydrolase (414 aa).

Residues R327–S329 and F409–G410 each bind substrate.

It belongs to the dUTPase family. Mg(2+) is required as a cofactor.

The catalysed reaction is dUTP + H2O = dUMP + diphosphate + H(+). In terms of biological role, involved in nucleotide metabolism: produces dUMP, the immediate precursor of thymidine nucleotides and decreases the intracellular concentration of dUTP to avoid uracil incorporation into viral DNA. The protein is Deoxyuridine 5'-triphosphate nucleotidohydrolase of Amazona oratrix (yellow-headed parrot).